We begin with the raw amino-acid sequence, 239 residues long: Zwei Ig domain protein zig-7 (239 aa).

A signal peptide spans 1 to 21; it reads MKLINCISIALLCTLVDFSSA. The N-linked (GlcNAc...) asparagine glycan is linked to N43. The Ig-like C2-type domain occupies 145–211; that stretch reads PHVIGAERRG…TEDHIGKYRC (67 aa). C164 and C211 form a disulfide bridge.

In terms of tissue distribution, expressed in body wall muscles.

The protein resides in the secreted. Probably not involved in maintaining the position of ASI and ASH head neuron cell bodies and ventral nerve cord axons of PVQ, PVP, RMEV, AVK and HSN neurons. The chain is Zwei Ig domain protein zig-7 from Caenorhabditis elegans.